A 554-amino-acid chain; its full sequence is Dihydroxy-acid dehydratase (554 aa).

Residue Asp-78 participates in Mg(2+) binding. Position 119 (Cys-119) interacts with [2Fe-2S] cluster. Mg(2+) is bound by residues Asp-120 and Lys-121. An N6-carboxylysine modification is found at Lys-121. Cys-191 provides a ligand contact to [2Fe-2S] cluster. Glu-442 serves as a coordination point for Mg(2+). Ser-468 acts as the Proton acceptor in catalysis.

This sequence belongs to the IlvD/Edd family. As to quaternary structure, homodimer. [2Fe-2S] cluster is required as a cofactor. Mg(2+) serves as cofactor.

The enzyme catalyses (2R)-2,3-dihydroxy-3-methylbutanoate = 3-methyl-2-oxobutanoate + H2O. It carries out the reaction (2R,3R)-2,3-dihydroxy-3-methylpentanoate = (S)-3-methyl-2-oxopentanoate + H2O. It functions in the pathway amino-acid biosynthesis; L-isoleucine biosynthesis; L-isoleucine from 2-oxobutanoate: step 3/4. The protein operates within amino-acid biosynthesis; L-valine biosynthesis; L-valine from pyruvate: step 3/4. Functionally, functions in the biosynthesis of branched-chain amino acids. Catalyzes the dehydration of (2R,3R)-2,3-dihydroxy-3-methylpentanoate (2,3-dihydroxy-3-methylvalerate) into 2-oxo-3-methylpentanoate (2-oxo-3-methylvalerate) and of (2R)-2,3-dihydroxy-3-methylbutanoate (2,3-dihydroxyisovalerate) into 2-oxo-3-methylbutanoate (2-oxoisovalerate), the penultimate precursor to L-isoleucine and L-valine, respectively. This Acetivibrio thermocellus (strain ATCC 27405 / DSM 1237 / JCM 9322 / NBRC 103400 / NCIMB 10682 / NRRL B-4536 / VPI 7372) (Clostridium thermocellum) protein is Dihydroxy-acid dehydratase.